Here is a 310-residue protein sequence, read N- to C-terminus: MRRLLSSTFAALIVGLAVFSAPAASWAYPFWAQQNYDSPREATGKIVCANCHLAQKLTQAEVPQSVLPDSVFKAVVKIPYDTGVQELGADGSQVPLQVGAVVMLPDGFTLAPQDRWTDEIKEETEGVYFTEYSDDQPNVILVGPIPGDEHQEIVFPVLAPDPATDSSISFGKYSIHVGGNRGRGQVYPTGEKSNNTVYTAPASGSVSAIEPGDNGASVVTVKSADGAEITETVPVGPALLVSVGDVVEAGAPITDDPNVGGFGQLDTEVVLQNPVRIYGMLAFFAAVALAQIMLVLKKRQIEKVQAAEGV.

The signal sequence occupies residues 1 to 23; that stretch reads MRRLLSSTFAALIVGLAVFSAPA. Residues Tyr28, Cys48, Cys51, and His52 each coordinate heme. Residues 277–297 form a helical membrane-spanning segment; that stretch reads IYGMLAFFAAVALAQIMLVLK.

This sequence belongs to the cytochrome f family. In terms of assembly, the 4 large subunits of the cytochrome b6-f complex are cytochrome b6, subunit IV (17 kDa polypeptide, PetD), cytochrome f and the Rieske protein, while the 4 small subunits are PetG, PetL, PetM and PetN. The complex functions as a dimer. It depends on heme as a cofactor.

Its subcellular location is the cellular thylakoid membrane. Functionally, component of the cytochrome b6-f complex, which mediates electron transfer between photosystem II (PSII) and photosystem I (PSI), cyclic electron flow around PSI, and state transitions. The protein is Cytochrome f of Synechococcus sp. (strain CC9311).